A 384-amino-acid chain; its full sequence is Interstitial collagenase (384 aa).

Positions 1-25 are cleaved as a signal peptide; the sequence is MLSGLWSSILALLGVFLQSVGEFRA. The propeptide at 26 to 88 is activation peptide; it reads ETQEQDVEIV…STCGVPDVGE (63 aa). A Cysteine switch motif is present at residues 79 to 86; sequence STCGVPDV. Zn(2+) is bound at residue C81. Ca(2+) is bound by residues D113 and D129. 2 residues coordinate Zn(2+): H139 and D141. Ca(2+)-binding residues include D146, G147, G149, and N151. A Zn(2+)-binding site is contributed by H154. G161, G163, and D165 together coordinate Ca(2+). H167 is a Zn(2+) binding site. Ca(2+) contacts are provided by D169, E170, and E172. Residue H189 participates in Zn(2+) binding. E190 is an active-site residue. Residues H193 and H199 each coordinate Zn(2+). The interval 218 to 239 is disordered; the sequence is LSQDDIDGPSGNPVQPRGPQTP. Residues C242 and C381 are joined by a disulfide bond. Residues D249, Q277, and D347 each coordinate Ca(2+). Hemopexin repeat units follow at residues 273–319 and 333–381; these read ELGL…FGFP and KQSM…WFNC.

This sequence belongs to the peptidase M10A family. Ca(2+) is required as a cofactor. It depends on Zn(2+) as a cofactor.

The protein resides in the secreted. It is found in the extracellular space. The protein localises to the extracellular matrix. The catalysed reaction is Cleavage of the triple helix of collagen at about three-quarters of the length of the molecule from the N-terminus, at 775-Gly-|-Ile-776 in the alpha1(I) chain. Cleaves synthetic substrates and alpha-macroglobulins at bonds where P1' is a hydrophobic residue.. Its activity is regulated as follows. Can be activated without removal of the activation peptide. Its function is as follows. Cleaves collagens of types I, II, and III at one site in the helical domain. Also cleaves collagens of types VII and X. The protein is Interstitial collagenase of Aquarana catesbeiana (American bullfrog).